The primary structure comprises 132 residues: Small ribosomal subunit protein uS11 (132 aa).

The segment covering 1–16 has biased composition (basic residues); that stretch reads MAAGMKGKRSRRRKER. The disordered stretch occupies residues 1-20; that stretch reads MAAGMKGKRSRRRKERKNVE.

Belongs to the universal ribosomal protein uS11 family. In terms of assembly, part of the 30S ribosomal subunit. Interacts with proteins S7 and S18. Binds to IF-3.

Located on the platform of the 30S subunit, it bridges several disparate RNA helices of the 16S rRNA. Forms part of the Shine-Dalgarno cleft in the 70S ribosome. This Clostridium botulinum (strain Loch Maree / Type A3) protein is Small ribosomal subunit protein uS11.